The following is a 753-amino-acid chain: MTILNHTLGFPRVGLRRELKKAQESYWAGNSTREELLAVGRELRARHWDQQKQAGIDLLPVGDFAWYDHVLTTSLLLGNVPARHQNKDGSVDIDTLFRIGRGRAPTGEPAAAAEMTKWFNTNYHYMVPEFVKGQQFKLTWTQLLDEVDEALALGHKVKPVLLGPVTWLWLGKVKGEQFDRLSLLNDILPVYQQVLAELAKRGIEWVQIDEPALVLELPQAWLDAYKPAYDALQGQVKLLLTTYFEGVTPNLDTITALPVQGLHVDLVHGKDDVAELHKRLPSDWLLSAGLINGRNVWRADLTEKYAQIKDIVGKRDLWVASSCSLLHSPIDLSVETRLDAEVKSWFAFALQKCHELALLRDALNSGDTAALAEWSAPIQARRHSTRVHNPAVEKRLAAITAQDSQRANVYEVRAEAQRARFKLPAWPTTTIGSFPQTTEIRTLRLDFKKGNLDANNYRTGIAEHIKQAIVEQERLGLDVLVHGEAERNDMVEYFGEHLDGFVFTQNGWVQSYGSRCVKPPIVIGDISRPAPITVEWAKYAQSLTDKPVKGMLTGPVTILCWSFPREDVSRETIAKQIALALRDEVADLEAAGIGIIQIDEPALREGLPLRRSDWDAYLQWGVEAFRINAAVAKDDTQIHTHMCYCEFNDIMDSIAALDADVITIETSRSDMELLESFEEFDYPNEIGPGVYDIHSPNVPSVEWIEALLKKAAKRIPAERLWVNPDCGLKTRGWPETRAALANMVQAAQNLRRG.

Residues 17 to 20 and Lys-117 each bind 5-methyltetrahydropteroyltri-L-glutamate; that span reads RELK. L-homocysteine-binding positions include 431 to 433 and Glu-484; that span reads IGS. Residues 431–433 and Glu-484 each bind L-methionine; that span reads IGS. Residues 515–516 and Trp-561 contribute to the 5-methyltetrahydropteroyltri-L-glutamate site; that span reads RC. Asp-599 serves as a coordination point for L-homocysteine. Asp-599 serves as a coordination point for L-methionine. Glu-605 contributes to the 5-methyltetrahydropteroyltri-L-glutamate binding site. 3 residues coordinate Zn(2+): His-641, Cys-643, and Glu-665. Catalysis depends on His-694, which acts as the Proton donor. Cys-726 is a Zn(2+) binding site.

This sequence belongs to the vitamin-B12 independent methionine synthase family. In terms of assembly, monomer. Requires Zn(2+) as cofactor.

The enzyme catalyses 5-methyltetrahydropteroyltri-L-glutamate + L-homocysteine = tetrahydropteroyltri-L-glutamate + L-methionine. It participates in amino-acid biosynthesis; L-methionine biosynthesis via de novo pathway; L-methionine from L-homocysteine (MetE route): step 1/1. Functionally, catalyzes the transfer of a methyl group from 5-methyltetrahydrofolate to homocysteine resulting in methionine formation. This is 5-methyltetrahydropteroyltriglutamate--homocysteine methyltransferase from Escherichia coli (strain K12).